The following is a 143-amino-acid chain: Peptide methionine sulfoxide reductase MsrB (143 aa).

Positions 16 to 139 (DAELRRRLTP…NSAALNFESR (124 aa)) constitute a MsrB domain. Zn(2+)-binding residues include Cys55, Cys58, Cys104, and Cys107. Cys128 acts as the Nucleophile in catalysis.

Belongs to the MsrB Met sulfoxide reductase family. Zn(2+) serves as cofactor.

It carries out the reaction L-methionyl-[protein] + [thioredoxin]-disulfide + H2O = L-methionyl-(R)-S-oxide-[protein] + [thioredoxin]-dithiol. The chain is Peptide methionine sulfoxide reductase MsrB from Burkholderia orbicola (strain MC0-3).